We begin with the raw amino-acid sequence, 126 residues long: FCS-Like Zinc finger 7 (126 aa).

The segment at 72–116 (SFLVNCGFCKRGLAPGRDIYMYKGDAAFCSIECREQQMEHDEGKT) adopts an FLZ-type zinc-finger fold.

Belongs to the FLZ family. In terms of assembly, interacts with KIN10 and KIN11 via its FLZ-type zinc finger domain. Interacts with KINB3 via its N-terminal part. Forms homodimer and heterodimer with FLZ1, FLZ2 and FLZ15 in vitro.

Its subcellular location is the cytoplasm. The protein resides in the nucleus. Functionally, may act as an adapter to facilitate the interaction of SnRK1 complex with effector proteins, conferring tissue- and stimulus-type specific differences in the SnRK1 regulation pathway. This is FCS-Like Zinc finger 7 from Arabidopsis thaliana (Mouse-ear cress).